The primary structure comprises 156 residues: Cyanate hydratase (156 aa).

Residues arginine 96, glutamate 99, and serine 122 contribute to the active site.

It belongs to the cyanase family.

The enzyme catalyses cyanate + hydrogencarbonate + 3 H(+) = NH4(+) + 2 CO2. Functionally, catalyzes the reaction of cyanate with bicarbonate to produce ammonia and carbon dioxide. The protein is Cyanate hydratase of Pseudomonas aeruginosa (strain UCBPP-PA14).